We begin with the raw amino-acid sequence, 422 residues long: 2-oxoglutarate and iron-dependent oxygenase JMJD4 (422 aa).

A JmjC domain is found at 139–298; it reads QRNFPEHNIY…IMWQFLQDEL (160 aa). Positions 186, 188, and 266 each coordinate Fe cation.

This sequence belongs to the JMJD6 family. The cofactor is Fe(2+).

It localises to the cytoplasm. The enzyme catalyses L-lysyl-[protein] + 2-oxoglutarate + O2 = 4-hydroxy-L-lysyl-[protein] + succinate + CO2. Catalyzes the 2-oxoglutarate and iron-dependent C4-lysyl hydroxylation of ETF1 at 'Lys-63' thereby promoting the translational termination efficiency of ETF1. The protein is 2-oxoglutarate and iron-dependent oxygenase JMJD4 (jmjd4) of Danio rerio (Zebrafish).